We begin with the raw amino-acid sequence, 156 residues long: Small ribosomal subunit protein uS7 (156 aa).

Belongs to the universal ribosomal protein uS7 family. In terms of assembly, part of the 30S ribosomal subunit. Contacts proteins S9 and S11.

One of the primary rRNA binding proteins, it binds directly to 16S rRNA where it nucleates assembly of the head domain of the 30S subunit. Is located at the subunit interface close to the decoding center, probably blocks exit of the E-site tRNA. The sequence is that of Small ribosomal subunit protein uS7 from Moorella thermoacetica (strain ATCC 39073 / JCM 9320).